Reading from the N-terminus, the 313-residue chain is tRNA dimethylallyltransferase (313 aa).

8 to 15 (GPTGTGKS) is a binding site for ATP. 10-15 (TGTGKS) serves as a coordination point for substrate.

It belongs to the IPP transferase family. Monomer. Mg(2+) is required as a cofactor.

It catalyses the reaction adenosine(37) in tRNA + dimethylallyl diphosphate = N(6)-dimethylallyladenosine(37) in tRNA + diphosphate. Its function is as follows. Catalyzes the transfer of a dimethylallyl group onto the adenine at position 37 in tRNAs that read codons beginning with uridine, leading to the formation of N6-(dimethylallyl)adenosine (i(6)A). The chain is tRNA dimethylallyltransferase from Mycolicibacterium gilvum (strain PYR-GCK) (Mycobacterium gilvum (strain PYR-GCK)).